We begin with the raw amino-acid sequence, 120 residues long: Immunoglobulin kappa variable 2D-29 (120 aa).

An N-terminal signal peptide occupies residues 1-20 (MRLPAQLLGLLMLWIPGSSA). The tract at residues 21–43 (DIVMTQTPLSLSVTPGQPASISC) is framework-1. An Ig-like domain is found at 21-120 (DIVMTQTPLS…YYCMQSIQLP (100 aa)). Residues Cys43 and Cys113 are joined by a disulfide bond. Residues 44–59 (KSSQSLLHSDGKTYLY) form a complementarity-determining-1 region. A framework-2 region spans residues 60–74 (WYLQKPGQPPQLLIY). The complementarity-determining-2 stretch occupies residues 75 to 81 (EVSNRFS). Residues 82-113 (GVPDRFSGSGSGTDFTLKISRVEAEDVGVYYC) are framework-3. Positions 114 to 120 (MQSIQLP) are complementarity-determining-3.

Immunoglobulins are composed of two identical heavy chains and two identical light chains; disulfide-linked.

The protein localises to the secreted. It localises to the cell membrane. Its function is as follows. V region of the variable domain of immunoglobulin light chains that participates in the antigen recognition. Immunoglobulins, also known as antibodies, are membrane-bound or secreted glycoproteins produced by B lymphocytes. In the recognition phase of humoral immunity, the membrane-bound immunoglobulins serve as receptors which, upon binding of a specific antigen, trigger the clonal expansion and differentiation of B lymphocytes into immunoglobulins-secreting plasma cells. Secreted immunoglobulins mediate the effector phase of humoral immunity, which results in the elimination of bound antigens. The antigen binding site is formed by the variable domain of one heavy chain, together with that of its associated light chain. Thus, each immunoglobulin has two antigen binding sites with remarkable affinity for a particular antigen. The variable domains are assembled by a process called V-(D)-J rearrangement and can then be subjected to somatic hypermutations which, after exposure to antigen and selection, allow affinity maturation for a particular antigen. This Homo sapiens (Human) protein is Immunoglobulin kappa variable 2D-29.